Here is a 957-residue protein sequence, read N- to C-terminus: UvrABC system protein A (957 aa).

33-40 provides a ligand contact to ATP; it reads GLSGSGKS. The C4-type zinc finger occupies 252-279; sequence CPHCGFSIGELEPRLFSFNSPFGACPTC. 2 ABC transporter domains span residues 309–587 and 607–935; these read WTPI…PNSL and PDGR…RYLK. 639-646 is a binding site for ATP; the sequence is GVSGSGKS. The C4-type zinc finger occupies 738–764; that stretch reads CEACRGDGIIKIEMHFLPDVYVPCEVC.

It belongs to the ABC transporter superfamily. UvrA family. In terms of assembly, forms a heterotetramer with UvrB during the search for lesions.

Its subcellular location is the cytoplasm. In terms of biological role, the UvrABC repair system catalyzes the recognition and processing of DNA lesions. UvrA is an ATPase and a DNA-binding protein. A damage recognition complex composed of 2 UvrA and 2 UvrB subunits scans DNA for abnormalities. When the presence of a lesion has been verified by UvrB, the UvrA molecules dissociate. This Bacillus subtilis (strain 168) protein is UvrABC system protein A.